The following is a 377-amino-acid chain: Nitric oxide reductase FlRd-NAD(+) reductase (377 aa).

The protein belongs to the FAD-dependent oxidoreductase family. The cofactor is FAD.

The protein localises to the cytoplasm. It carries out the reaction 2 reduced [nitric oxide reductase rubredoxin domain] + NAD(+) + H(+) = 2 oxidized [nitric oxide reductase rubredoxin domain] + NADH. It functions in the pathway nitrogen metabolism; nitric oxide reduction. Its function is as follows. One of at least two accessory proteins for anaerobic nitric oxide (NO) reductase. Reduces the rubredoxin moiety of NO reductase. The protein is Nitric oxide reductase FlRd-NAD(+) reductase of Escherichia fergusonii (strain ATCC 35469 / DSM 13698 / CCUG 18766 / IAM 14443 / JCM 21226 / LMG 7866 / NBRC 102419 / NCTC 12128 / CDC 0568-73).